Consider the following 185-residue polypeptide: Ribosome-recycling factor (185 aa).

Belongs to the RRF family.

The protein resides in the cytoplasm. Its function is as follows. Responsible for the release of ribosomes from messenger RNA at the termination of protein biosynthesis. May increase the efficiency of translation by recycling ribosomes from one round of translation to another. This chain is Ribosome-recycling factor, found in Neisseria gonorrhoeae (strain ATCC 700825 / FA 1090).